Consider the following 494-residue polypeptide: Protein nucleotidyltransferase YdiU (494 aa).

Residues glycine 90, glycine 92, arginine 93, lysine 113, aspartate 125, glycine 126, arginine 176, and arginine 183 each contribute to the ATP site. Residue aspartate 252 is the Proton acceptor of the active site. Asparagine 253 and aspartate 262 together coordinate Mg(2+). Aspartate 262 serves as a coordination point for ATP.

It belongs to the SELO family. It depends on Mg(2+) as a cofactor. Requires Mn(2+) as cofactor.

The enzyme catalyses L-seryl-[protein] + ATP = 3-O-(5'-adenylyl)-L-seryl-[protein] + diphosphate. It carries out the reaction L-threonyl-[protein] + ATP = 3-O-(5'-adenylyl)-L-threonyl-[protein] + diphosphate. It catalyses the reaction L-tyrosyl-[protein] + ATP = O-(5'-adenylyl)-L-tyrosyl-[protein] + diphosphate. The catalysed reaction is L-histidyl-[protein] + UTP = N(tele)-(5'-uridylyl)-L-histidyl-[protein] + diphosphate. The enzyme catalyses L-seryl-[protein] + UTP = O-(5'-uridylyl)-L-seryl-[protein] + diphosphate. It carries out the reaction L-tyrosyl-[protein] + UTP = O-(5'-uridylyl)-L-tyrosyl-[protein] + diphosphate. Functionally, nucleotidyltransferase involved in the post-translational modification of proteins. It can catalyze the addition of adenosine monophosphate (AMP) or uridine monophosphate (UMP) to a protein, resulting in modifications known as AMPylation and UMPylation. This Alkalilimnicola ehrlichii (strain ATCC BAA-1101 / DSM 17681 / MLHE-1) protein is Protein nucleotidyltransferase YdiU.